Reading from the N-terminus, the 74-residue chain is Protein kish-B (74 aa).

The signal sequence occupies residues 1 to 22; that stretch reads MTNVYSLDGLLVFALLFVCTCA. Residues 23–52 are Extracellular-facing; that stretch reads YFRKVPRLRSWLLSEKKGVWGVFYKAAVIG. Residues 53-73 traverse the membrane as a helical segment; that stretch reads SRLHLAVSISCIAMAFYVLFI. Lys74 is a topological domain (cytoplasmic).

It belongs to the KISH family.

It is found in the golgi apparatus membrane. Functionally, involved in the early part of the secretory pathway. The sequence is that of Protein kish-B (tmem167b) from Xenopus laevis (African clawed frog).